The primary structure comprises 276 residues: NAD-capped RNA hydrolase NudC (276 aa).

Arg-82 serves as a coordination point for substrate. Positions 112 and 115 each coordinate Zn(2+). A substrate-binding site is contributed by Glu-125. Cys-130 and Cys-133 together coordinate Zn(2+). Residue Tyr-138 participates in substrate binding. The Nudix hydrolase domain maps to 139 to 262; sequence PRISPSMIVL…SIARYLIDLY (124 aa). A divalent metal cation-binding residues include Ala-172, Glu-188, and Glu-192. The short motif at 173–194 is the Nudix box element; the sequence is GFAEPGESAEDCLVREVREEVA. 206–213 is a substrate binding site; that stretch reads QCWPFPHS. An a divalent metal cation-binding site is contributed by Glu-233. Ala-255 serves as a coordination point for substrate.

This sequence belongs to the Nudix hydrolase family. NudC subfamily. Homodimer. Mg(2+) serves as cofactor. Mn(2+) is required as a cofactor. The cofactor is Zn(2+).

The enzyme catalyses a 5'-end NAD(+)-phospho-ribonucleoside in mRNA + H2O = a 5'-end phospho-adenosine-phospho-ribonucleoside in mRNA + beta-nicotinamide D-ribonucleotide + 2 H(+). It catalyses the reaction NAD(+) + H2O = beta-nicotinamide D-ribonucleotide + AMP + 2 H(+). The catalysed reaction is NADH + H2O = reduced beta-nicotinamide D-ribonucleotide + AMP + 2 H(+). MRNA decapping enzyme that specifically removes the nicotinamide adenine dinucleotide (NAD) cap from a subset of mRNAs by hydrolyzing the diphosphate linkage to produce nicotinamide mononucleotide (NMN) and 5' monophosphate mRNA. The NAD-cap is present at the 5'-end of some mRNAs and stabilizes RNA against 5'-processing. Has preference for mRNAs with a 5'-end purine. Catalyzes the hydrolysis of a broad range of dinucleotide pyrophosphates. The chain is NAD-capped RNA hydrolase NudC from Pseudomonas putida (strain ATCC 700007 / DSM 6899 / JCM 31910 / BCRC 17059 / LMG 24140 / F1).